The primary structure comprises 307 residues: Porphobilinogen deaminase (307 aa).

S-(dipyrrolylmethanemethyl)cysteine is present on Cys239.

The protein belongs to the HMBS family. As to quaternary structure, monomer. Requires dipyrromethane as cofactor.

The catalysed reaction is 4 porphobilinogen + H2O = hydroxymethylbilane + 4 NH4(+). It participates in porphyrin-containing compound metabolism; protoporphyrin-IX biosynthesis; coproporphyrinogen-III from 5-aminolevulinate: step 2/4. In terms of biological role, tetrapolymerization of the monopyrrole PBG into the hydroxymethylbilane pre-uroporphyrinogen in several discrete steps. The polypeptide is Porphobilinogen deaminase (Campylobacter jejuni subsp. jejuni serotype O:6 (strain 81116 / NCTC 11828)).